The primary structure comprises 63 residues: MGTPIKKISTVIIKMVSSANTGYFYRTTKSALLSTKKLLLRKYDPVIRQHVLFKEEKISRKKN.

It belongs to the bacterial ribosomal protein bL33 family.

It is found in the mitochondrion. The polypeptide is Large ribosomal subunit protein bL33m (mrpl33) (Dictyostelium discoideum (Social amoeba)).